Consider the following 183-residue polypeptide: Large ribosomal subunit protein uL5 (183 aa).

Belongs to the universal ribosomal protein uL5 family. As to quaternary structure, part of the 50S ribosomal subunit; part of the 5S rRNA/L5/L18/L25 subcomplex. Contacts the 5S rRNA and the P site tRNA. Forms a bridge to the 30S subunit in the 70S ribosome.

Its function is as follows. This is one of the proteins that bind and probably mediate the attachment of the 5S RNA into the large ribosomal subunit, where it forms part of the central protuberance. In the 70S ribosome it contacts protein S13 of the 30S subunit (bridge B1b), connecting the 2 subunits; this bridge is implicated in subunit movement. Contacts the P site tRNA; the 5S rRNA and some of its associated proteins might help stabilize positioning of ribosome-bound tRNAs. The sequence is that of Large ribosomal subunit protein uL5 from Christiangramia forsetii (strain DSM 17595 / CGMCC 1.15422 / KT0803) (Gramella forsetii).